Consider the following 85-residue polypeptide: RNA-binding protein Hfq (85 aa).

The 60-residue stretch at 9-68 (DPFLNALRRERVPVSIYLVNGIKLQGQVESFDQFVILLKNTVSQMVYKHAISTVVPARPF) folds into the Sm domain.

This sequence belongs to the Hfq family. As to quaternary structure, homohexamer.

Functionally, RNA chaperone that binds small regulatory RNA (sRNAs) and mRNAs to facilitate mRNA translational regulation in response to envelope stress, environmental stress and changes in metabolite concentrations. Also binds with high specificity to tRNAs. The chain is RNA-binding protein Hfq from Shewanella frigidimarina (strain NCIMB 400).